Reading from the N-terminus, the 362-residue chain is Olfactory receptor 5AU1 (362 aa).

At 1-79 (MTEFHLQSQM…TDPQLQRLLF (79 aa)) the chain is on the extracellular side. N-linked (GlcNAc...) asparagine glycosylation is present at N56. Residues 80 to 100 (VVFLGMYTATLLGNLVMFLLI) traverse the membrane as a helical segment. Residues 101–116 (HVSATLHTPMYSLLKS) are Cytoplasmic-facing. The helical transmembrane segment at 117–139 (LSFLDFCYSSTVVPQTLVNFLAK) threads the bilayer. The Extracellular portion of the chain corresponds to 140 to 150 (RKVISYFGCMT). C148 and C230 are disulfide-bonded. A helical membrane pass occupies residues 151 to 171 (QMFFYAGFATSECYLIAAMAY). Topologically, residues 172–194 (DRYAAICNPLLYSTIMSPEVCAS) are cytoplasmic. A helical transmembrane segment spans residues 195-215 (LIVGSYSAGFLNSLIHTGCIF). Over 216–247 (SLKFCGAHVVTHFFCDGPPILSLSCVDTSLCE) the chain is Extracellular. A helical transmembrane segment spans residues 248–268 (ILLFIFAGFNLLSCTLTILIS). Residues 269 to 290 (YFLILNTILKMSSAQGRFKAFS) lie on the Cytoplasmic side of the membrane. A helical transmembrane segment spans residues 291 to 311 (TCASHLTAICLFFGTTLFMYL). The Extracellular segment spans residues 312-322 (RPRSSYSLTQD). Residues 323-343 (RTVAVIYTVVIPVLNPLMYSL) form a helical membrane-spanning segment. Residues 344–362 (RNKDVKKALIKVWGRKTME) are Cytoplasmic-facing.

It belongs to the G-protein coupled receptor 1 family.

The protein resides in the cell membrane. Functionally, odorant receptor. The chain is Olfactory receptor 5AU1 (OR5AU1) from Homo sapiens (Human).